We begin with the raw amino-acid sequence, 51 residues long: FNKLKQGSSKRTCAKCFRKIMPSVHELDERRRGANRWAAGFRKCVSSICRY.

Functionally, antibacterial activity against both Gram-negative and Gram-positive bacteria. Shows marked activity against P.aeruginosa, B.megaterium, A.viridans, moderate activity against E.coli K-12, S.aureus and M.luteus, and minor activity against P.vulgaris. Antifungal activity against P.heliothis. This is Perinerin from Perinereis aibuhitensis (Korean lugworm).